Reading from the N-terminus, the 440-residue chain is Signal recognition particle 54 kDa protein (440 aa).

GTP contacts are provided by residues 104 to 111 (GLQGSGKT), 184 to 188 (DTAGR), and 242 to 245 (TKLD).

This sequence belongs to the GTP-binding SRP family. SRP54 subfamily. In terms of assembly, part of the signal recognition particle protein translocation system, which is composed of SRP and FtsY. Archaeal SRP consists of a 7S RNA molecule of 300 nucleotides and two protein subunits: SRP54 and SRP19.

Its subcellular location is the cytoplasm. The enzyme catalyses GTP + H2O = GDP + phosphate + H(+). Involved in targeting and insertion of nascent membrane proteins into the cytoplasmic membrane. Binds to the hydrophobic signal sequence of the ribosome-nascent chain (RNC) as it emerges from the ribosomes. The SRP-RNC complex is then targeted to the cytoplasmic membrane where it interacts with the SRP receptor FtsY. The protein is Signal recognition particle 54 kDa protein of Methanosarcina acetivorans (strain ATCC 35395 / DSM 2834 / JCM 12185 / C2A).